We begin with the raw amino-acid sequence, 339 residues long: Large ribosomal subunit protein uL10 (339 aa).

A disordered region spans residues 300–339 (AAAQATPSVEEREEEEKPEEEEEEEEKEEEAIEGLGALFG). Over residues 310–331 (EREEEEKPEEEEEEEEKEEEAI) the composition is skewed to acidic residues.

Belongs to the universal ribosomal protein uL10 family. Part of the 50S ribosomal subunit. Forms part of the ribosomal stalk which helps the ribosome interact with GTP-bound translation factors. Forms a heptameric L10(L12)2(L12)2(L12)2 complex, where L10 forms an elongated spine to which the L12 dimers bind in a sequential fashion.

Functionally, forms part of the ribosomal stalk, playing a central role in the interaction of the ribosome with GTP-bound translation factors. In Archaeoglobus fulgidus (strain ATCC 49558 / DSM 4304 / JCM 9628 / NBRC 100126 / VC-16), this protein is Large ribosomal subunit protein uL10.